Consider the following 479-residue polypeptide: Aspartyl/glutamyl-tRNA(Asn/Gln) amidotransferase subunit B (479 aa).

The protein belongs to the GatB/GatE family. GatB subfamily. Heterotrimer of A, B and C subunits.

The enzyme catalyses L-glutamyl-tRNA(Gln) + L-glutamine + ATP + H2O = L-glutaminyl-tRNA(Gln) + L-glutamate + ADP + phosphate + H(+). The catalysed reaction is L-aspartyl-tRNA(Asn) + L-glutamine + ATP + H2O = L-asparaginyl-tRNA(Asn) + L-glutamate + ADP + phosphate + 2 H(+). Allows the formation of correctly charged Asn-tRNA(Asn) or Gln-tRNA(Gln) through the transamidation of misacylated Asp-tRNA(Asn) or Glu-tRNA(Gln) in organisms which lack either or both of asparaginyl-tRNA or glutaminyl-tRNA synthetases. The reaction takes place in the presence of glutamine and ATP through an activated phospho-Asp-tRNA(Asn) or phospho-Glu-tRNA(Gln). The protein is Aspartyl/glutamyl-tRNA(Asn/Gln) amidotransferase subunit B of Streptococcus pyogenes serotype M28 (strain MGAS6180).